A 264-amino-acid polypeptide reads, in one-letter code: Thymidylate synthase (264 aa).

DUMP is bound at residue R21. H51 contributes to the (6R)-5,10-methylene-5,6,7,8-tetrahydrofolate binding site. DUMP is bound at residue 126-127 (RR). The active-site Nucleophile is the C146. DUMP contacts are provided by residues 166–169 (RSGD), N177, and 207–209 (HLY). Residue D169 coordinates (6R)-5,10-methylene-5,6,7,8-tetrahydrofolate. Position 263 (A263) interacts with (6R)-5,10-methylene-5,6,7,8-tetrahydrofolate.

It belongs to the thymidylate synthase family. Bacterial-type ThyA subfamily. Homodimer.

The protein localises to the cytoplasm. The enzyme catalyses dUMP + (6R)-5,10-methylene-5,6,7,8-tetrahydrofolate = 7,8-dihydrofolate + dTMP. It participates in pyrimidine metabolism; dTTP biosynthesis. Its function is as follows. Catalyzes the reductive methylation of 2'-deoxyuridine-5'-monophosphate (dUMP) to 2'-deoxythymidine-5'-monophosphate (dTMP) while utilizing 5,10-methylenetetrahydrofolate (mTHF) as the methyl donor and reductant in the reaction, yielding dihydrofolate (DHF) as a by-product. This enzymatic reaction provides an intracellular de novo source of dTMP, an essential precursor for DNA biosynthesis. In Brevibacillus brevis (strain 47 / JCM 6285 / NBRC 100599), this protein is Thymidylate synthase.